The sequence spans 71 residues: Small ribosomal subunit protein bS21 (71 aa).

Positions 47 to 71 (RENATRAKRHAKRVARENARNTRLY) are disordered. Over residues 60–71 (VARENARNTRLY) the composition is skewed to basic and acidic residues.

It belongs to the bacterial ribosomal protein bS21 family.

The sequence is that of Small ribosomal subunit protein bS21 from Actinobacillus succinogenes (strain ATCC 55618 / DSM 22257 / CCUG 43843 / 130Z).